The following is a 674-amino-acid chain: Methionine--tRNA ligase (674 aa).

A 'HIGH' region motif is present at residues 11-21 (PYANGDLHLGH). Residues cysteine 142, cysteine 145, cysteine 155, and cysteine 158 each coordinate Zn(2+). The 'KMSKS' region signature appears at 330–334 (KMSKS). Lysine 333 serves as a coordination point for ATP. One can recognise a tRNA-binding domain in the interval 574–674 (DFMKVDLRIA…EGAQPGMRVK (101 aa)).

This sequence belongs to the class-I aminoacyl-tRNA synthetase family. MetG type 1 subfamily. In terms of assembly, homodimer. Zn(2+) is required as a cofactor.

The protein localises to the cytoplasm. It carries out the reaction tRNA(Met) + L-methionine + ATP = L-methionyl-tRNA(Met) + AMP + diphosphate. Its function is as follows. Is required not only for elongation of protein synthesis but also for the initiation of all mRNA translation through initiator tRNA(fMet) aminoacylation. In Francisella tularensis subsp. holarctica (strain OSU18), this protein is Methionine--tRNA ligase.